Here is a 1098-residue protein sequence, read N- to C-terminus: Protein translocase subunit SecA (1098 aa).

Residues glutamine 176, 194–198 (GEGKT), and aspartate 696 each bind ATP. Positions 1024 to 1098 (EPEQVREAAP…KYKNCHGQNA (75 aa)) are disordered. 2 stretches are compositionally biased toward basic and acidic residues: residues 1041 to 1051 (QYREEKQDLSD) and 1058 to 1077 (AEHD…KTVG). Zn(2+)-binding residues include cysteine 1082, cysteine 1084, cysteine 1093, and histidine 1094.

It belongs to the SecA family. Monomer and homodimer. Part of the essential Sec protein translocation apparatus which comprises SecA, SecYEG and auxiliary proteins SecDF. Other proteins may also be involved. Zn(2+) is required as a cofactor.

Its subcellular location is the cell inner membrane. The protein resides in the cytoplasm. The catalysed reaction is ATP + H2O + cellular proteinSide 1 = ADP + phosphate + cellular proteinSide 2.. Part of the Sec protein translocase complex. Interacts with the SecYEG preprotein conducting channel. Has a central role in coupling the hydrolysis of ATP to the transfer of proteins into and across the cell membrane, serving as an ATP-driven molecular motor driving the stepwise translocation of polypeptide chains across the membrane. The sequence is that of Protein translocase subunit SecA from Phocaeicola vulgatus (strain ATCC 8482 / DSM 1447 / JCM 5826 / CCUG 4940 / NBRC 14291 / NCTC 11154) (Bacteroides vulgatus).